Consider the following 104-residue polypeptide: Secretoglobin family 3A member 1 (104 aa).

The signal sequence occupies residues 1 to 21 (MKLTTTFLVLCVALLSDSGVA).

The protein belongs to the secretoglobin family. UGRP subfamily. As to quaternary structure, homodimer; disulfide-linked. Highly expressed in lung, where it localizes to epithelial cells lining the trachea and bronchi. Expression in lung is mainly restricted to bronchi, submucosal glands of the trachea, and tracheal epithelium, with little expression in terminal bronchioles. Expressed in uterus where it localizes to epithelial cells of the uterine glands. Also detected in heart, stomach and small intestine.

The protein localises to the secreted. In terms of biological role, secreted cytokine-like protein. Inhibits cell growth in vitro. In Mus musculus (Mouse), this protein is Secretoglobin family 3A member 1 (Scgb3a1).